The primary structure comprises 293 residues: 33 kDa chaperonin (293 aa).

2 disulfide bridges follow: Cys229–Cys231 and Cys262–Cys265.

The protein belongs to the HSP33 family. Under oxidizing conditions two disulfide bonds are formed involving the reactive cysteines. Under reducing conditions zinc is bound to the reactive cysteines and the protein is inactive.

It localises to the cytoplasm. Redox regulated molecular chaperone. Protects both thermally unfolding and oxidatively damaged proteins from irreversible aggregation. Plays an important role in the bacterial defense system toward oxidative stress. This is 33 kDa chaperonin from Methylobacillus flagellatus (strain ATCC 51484 / DSM 6875 / VKM B-1610 / KT).